We begin with the raw amino-acid sequence, 341 residues long: Glycerol-3-phosphate dehydrogenase [NAD(P)+] 1 (341 aa).

Serine 11, tryptophan 12, arginine 32, arginine 33, and lysine 106 together coordinate NADPH. Residues lysine 106, glycine 137, and serine 139 each coordinate sn-glycerol 3-phosphate. Residue alanine 141 coordinates NADPH. 5 residues coordinate sn-glycerol 3-phosphate: lysine 192, aspartate 245, serine 255, arginine 256, and asparagine 257. The active-site Proton acceptor is lysine 192. Arginine 256 is an NADPH binding site. Residues valine 280 and glutamate 282 each contribute to the NADPH site.

It belongs to the NAD-dependent glycerol-3-phosphate dehydrogenase family.

The protein resides in the cytoplasm. It carries out the reaction sn-glycerol 3-phosphate + NAD(+) = dihydroxyacetone phosphate + NADH + H(+). It catalyses the reaction sn-glycerol 3-phosphate + NADP(+) = dihydroxyacetone phosphate + NADPH + H(+). Its pathway is membrane lipid metabolism; glycerophospholipid metabolism. Functionally, catalyzes the reduction of the glycolytic intermediate dihydroxyacetone phosphate (DHAP) to sn-glycerol 3-phosphate (G3P), the key precursor for phospholipid synthesis. The chain is Glycerol-3-phosphate dehydrogenase [NAD(P)+] 1 from Salinibacter ruber (strain DSM 13855 / M31).